The sequence spans 530 residues: MRAERLRLSEEQGQRILRLYHLYRLTIGLVLVLLISSELEDQVLKLVHPELFHVGSWCYLVFNILVALFLPPSRQLLPIFILALTDVLMLCGLFYAGGGVPSGIGSLLVVAVAIANILLRGRIGLVIAAAASLGLLYLTFFLSLSSPDATNHYVQAGGLGTLCFAAALVIQALVRRQEQTETLAEERAETVANLEELNALILQRMRTGILVVDSRQAILLANQAALGLLRQDDVQGASLGRHSPMLMHCMKQWRLNPSLRPPTLKVVPDGPTVQPSFISLNREDDQHVLIFLEDISQIAQQAQQMKLAGLGRLTAGIAHEIRNPLGAISHAAQLLQESEELDAPDRRLTQIIQDQSKRMNLVIENVLQLSRRRQAEPQQLDLKEWLQRFVDEYPGRLRNDSQLHLQLGAGDIQTRMDPHQLNQVLSNLVQNGLRYSAQAHGRGQVWLSLARDPESDLPVLEVIDDGPGVPADKLNNLFEPFFTTESKGTGLGLYLSRELCESNQARIDYRNREEGGGCFRITFAHPRKLS.

Helical transmembrane passes span 25–37 (LTIGLVLVLLISS), 57–70 (WCYLVFNILVALFL), 76–98 (LLPIFILALTDVLMLCGLFYAGG), 101–119 (PSGIGSLLVVAVAIANILL), 124–144 (GLVIAAAASLGLLYLTFFLSL), and 156–174 (AGGLGTLCFAAALVIQALV). Over 175 to 530 (RRQEQTETLA…ITFAHPRKLS (356 aa)) the chain is Cytoplasmic. The region spanning 196–260 (ELNALILQRM…KQWRLNPSLR (65 aa)) is the PAS domain. A Histidine kinase domain is found at 316–527 (GIAHEIRNPL…CFRITFAHPR (212 aa)). His319 bears the Phosphohistidine; by autocatalysis mark.

Interacts with PilA.

It localises to the cell inner membrane. The catalysed reaction is ATP + protein L-histidine = ADP + protein N-phospho-L-histidine.. Functionally, member of the two-component regulatory system PilS/PilR that regulates the expression of multiple genes including the type IV pilus (T4P) major subunit PilA. Thereby, plays a major role in the regulation of multiple motility pathways. Functions as a membrane-associated protein kinase that phosphorylates PilR in response to environmental signals leading to activation of specific gene promoters including the pilin gene. This Pseudomonas aeruginosa (strain ATCC 15692 / DSM 22644 / CIP 104116 / JCM 14847 / LMG 12228 / 1C / PRS 101 / PAO1) protein is Sensor protein kinase PilS (pilS).